A 1562-amino-acid polypeptide reads, in one-letter code: Phospholipid-transporting ATPase dnf1 (1562 aa).

Disordered regions lie at residues 1–38 (MKSS…ADDG), 55–94 (LPLG…SDSR), 115–134 (TPST…KKAH), and 146–166 (PLDD…NGRP). Residues 1-275 (MKSSGIAGDS…IAIMQMIPGW (275 aa)) lie on the Extracellular side of the membrane. Residues 12 to 21 (GFETNFLNET) are compositionally biased toward polar residues. The segment covering 60–69 (DENELDEIDI) has biased composition (acidic residues). Residues 71 to 86 (GDSKKLDSVEVDESHD) are compositionally biased toward basic and acidic residues. A helical membrane pass occupies residues 276–296 (STTGTYTTIIPLLIFISIAIL). Topologically, residues 297–574 (REGFDNYRRY…APSMQKVTNR (278 aa)) are cytoplasmic. Positions 347–406 (SQESASRSTIRSTDEREPERTSEDPPQLPPSPSSPSSPALSVKPNIDPQPPLYNSTLTTT) are disordered. Residues 358–369 (STDEREPERTSE) show a composition bias toward basic and acidic residues. Over residues 372-381 (PQLPPSPSSP) the composition is skewed to pro residues. The helical transmembrane segment at 575 to 595 (IVIFIFALVVSMAIYCTAAYF) threads the bilayer. Residues 596-614 (VWQKKVERKLWYLTNSKLS) lie on the Extracellular side of the membrane. Residues 615–635 (FVPILVSFIILYNTMVPISLY) form a helical membrane-spanning segment. Residues 636 to 1309 (VSMEIIRVFQ…YILGTFYKEQ (674 aa)) are Cytoplasmic-facing. Asp-684 serves as the catalytic 4-aspartylphosphate intermediate. 8 residues coordinate ATP: Asp-684, Lys-685, Thr-686, Glu-794, Phe-843, Ser-845, Lys-848, and Lys-866. Residue Asp-684 coordinates Mg(2+). A Mg(2+)-binding site is contributed by Thr-686. Ser-954 bears the Phosphoserine mark. Residues Arg-1022, Thr-1023, Thr-1102, Gly-1103, Asp-1104, 1181–1188 (VIVIDGST), Arg-1216, and Lys-1222 each bind ATP. Asp-1243 is a Mg(2+) binding site. The ATP site is built by Asn-1246 and Asp-1247. A helical transmembrane segment spans residues 1310–1330 (FFFLMQAIMQPFVGYTGQSLY). The Extracellular portion of the chain corresponds to 1331–1332 (ES). The helical transmembrane segment at 1333–1353 (WGLTCFNTLFSSLCVIGLGIF) threads the bilayer. Residues 1354 to 1381 (EKDLSASTVIAVPELYQKGINNEAFNWR) are Cytoplasmic-facing. The helical transmembrane segment at 1382–1402 (VYFGWCSIAFIQAFLVFYVTY) threads the bilayer. The Extracellular segment spans residues 1403-1414 (SLFGMKELNDNN). Residues 1415–1435 (IFAYGQLIFTAAIFIMNFKLV) traverse the membrane as a helical segment. Residues 1436–1443 (FIEMQYIN) are Cytoplasmic-facing. Residues 1444-1464 (IISIIVLVLTSLAWFLFNIFI) form a helical membrane-spanning segment. Residues 1465–1490 (SEHYPDKNLYLARSQFLHHFGKNPSW) are Extracellular-facing. A helical membrane pass occupies residues 1491-1511 (WLTMLFVMVCALTIDIVAQML). Residues 1512–1562 (RRTLRPTDTDIFVEMENDAFVRSRFEQESGEFLQANAPSVDEIEQYLKSRD) are Cytoplasmic-facing.

This sequence belongs to the cation transport ATPase (P-type) (TC 3.A.3) family. Type IV subfamily. Mg(2+) is required as a cofactor.

The protein resides in the golgi apparatus. It is found in the trans-Golgi network membrane. Its subcellular location is the endosome membrane. The enzyme catalyses ATP + H2O + phospholipidSide 1 = ADP + phosphate + phospholipidSide 2.. It catalyses the reaction a 1,2-diacyl-sn-glycero-3-phosphocholine(out) + ATP + H2O = a 1,2-diacyl-sn-glycero-3-phosphocholine(in) + ADP + phosphate + H(+). The catalysed reaction is a 1,2-diacyl-sn-glycero-3-phosphoethanolamine(out) + ATP + H2O = a 1,2-diacyl-sn-glycero-3-phosphoethanolamine(in) + ADP + phosphate + H(+). In terms of biological role, catalytic component of a P4-ATPase flippase complex which catalyzes the hydrolysis of ATP coupled to the transport of phosphatidylcholine and small amounts of phosphatidylethanolamine from the lumen to the cytosolic leaflet of the trans-Golgi network and ensures the maintenance of asymmetric distribution of phospholipids. May be involved in transport from early endosomes to the trans-Golgi network (TGN). The sequence is that of Phospholipid-transporting ATPase dnf1 from Schizosaccharomyces pombe (strain 972 / ATCC 24843) (Fission yeast).